Reading from the N-terminus, the 175-residue chain is COMPASS component SDC1 (175 aa).

A compositionally biased stretch (polar residues) spans 1 to 12 (MNESENSPQHNE). The interval 1–45 (MNESENSPQHNEVTVPMVEDTSSNADIPMEQIQREDNKNYDKHDN) is disordered. Basic and acidic residues predominate over residues 32-45 (IQREDNKNYDKHDN). The tract at residues 121–162 (QTRKYLNTNVTPHLLAGMRLIAVQQPEDPLRVLGEYLIEQSN) is DPY-30.

The protein belongs to the dpy-30 family. Component of the Set1C/COMPASS complex which consists of SET1(2), BRE2(2), SPP1(2), SDC1(1), SHG1(1), SWD1(1), SWD2(1), and SWD3(1). Interacts directly with BRE2.

It localises to the nucleus. In terms of biological role, component of the Set1C/COMPASS complex that specifically mono-, di- and trimethylates histone H3 to form H3K4me1/2/3, which subsequently plays a role in telomere length maintenance and transcription elongation regulation. COMPASS recognizes ubiquitinated H2B on one face of the nucleosome which stimulates the methylation of H3 on the opposing face. This is COMPASS component SDC1 from Saccharomyces cerevisiae (strain ATCC 204508 / S288c) (Baker's yeast).